The primary structure comprises 526 residues: Transcription factor MYC1 (526 aa).

The tract at residues 330 to 351 (MFPSQNSGLNQDDPSDRRKENE) is disordered. A compositionally biased stretch (polar residues) spans 332–341 (PSQNSGLNQD). One can recognise a bHLH domain in the interval 333 to 382 (SQNSGLNQDDPSDRRKENEKFSVLRTMVPTVNEVDKESILNNTIKYLQEL).

As to quaternary structure, homodimer. Interacts with MYB75/PAP1, MYB90/PAP2, MYB4, MYB5, MYB6, MYB23, MYB82, MYB113, MYB114, TT2, MYB0/GL1, and MYB66/WER. Mostly expressed in developing seeds. Also detected in stems and leaves.

Its subcellular location is the nucleus. Functionally, trancsription activator, when associated with MYB75/PAP1 or MYB90/PAP2. The protein is Transcription factor MYC1 (BHLH12) of Arabidopsis thaliana (Mouse-ear cress).